A 338-amino-acid polypeptide reads, in one-letter code: Ketol-acid reductoisomerase (NADP(+)) (338 aa).

Residues 1–181 enclose the KARI N-terminal Rossmann domain; that stretch reads MKVYYDKDAD…GGTKGGVIET (181 aa). NADP(+) is bound by residues 24–27, Arg47, and Ser52; that span reads YGSQ. His107 is an active-site residue. Gly133 provides a ligand contact to NADP(+). A KARI C-terminal knotted domain is found at 182 to 327; sequence NFKEETETDL…GQLRDMMPWI (146 aa). Asp190, Glu194, Glu226, and Glu230 together coordinate Mg(2+). Residue Ser251 participates in substrate binding.

Belongs to the ketol-acid reductoisomerase family. Mg(2+) is required as a cofactor.

It catalyses the reaction (2R)-2,3-dihydroxy-3-methylbutanoate + NADP(+) = (2S)-2-acetolactate + NADPH + H(+). The enzyme catalyses (2R,3R)-2,3-dihydroxy-3-methylpentanoate + NADP(+) = (S)-2-ethyl-2-hydroxy-3-oxobutanoate + NADPH + H(+). It functions in the pathway amino-acid biosynthesis; L-isoleucine biosynthesis; L-isoleucine from 2-oxobutanoate: step 2/4. The protein operates within amino-acid biosynthesis; L-valine biosynthesis; L-valine from pyruvate: step 2/4. Functionally, involved in the biosynthesis of branched-chain amino acids (BCAA). Catalyzes an alkyl-migration followed by a ketol-acid reduction of (S)-2-acetolactate (S2AL) to yield (R)-2,3-dihydroxy-isovalerate. In the isomerase reaction, S2AL is rearranged via a Mg-dependent methyl migration to produce 3-hydroxy-3-methyl-2-ketobutyrate (HMKB). In the reductase reaction, this 2-ketoacid undergoes a metal-dependent reduction by NADPH to yield (R)-2,3-dihydroxy-isovalerate. The chain is Ketol-acid reductoisomerase (NADP(+)) from Azoarcus sp. (strain BH72).